Consider the following 492-residue polypeptide: Solute carrier family 2, facilitated glucose transporter member 1 (492 aa).

At M1 the chain carries N-acetylmethionine. Topologically, residues 1–11 are cytoplasmic; that stretch reads MDPSSKKVTGR. A helical transmembrane segment spans residues 12–33; the sequence is LMLAVGGAVLGSLQFGYNTGVI. At 34–66 the chain is on the extracellular side; it reads NAPQKVIEEFYNQTWNHRYGEPIPSTTLTTLWS. Residue N45 is glycosylated (N-linked (GlcNAc...) asparagine). Residues 67 to 87 form a helical membrane-spanning segment; that stretch reads LSVAIFSVGGMIGSFSVGLFV. Residues 88-90 are Cytoplasmic-facing; the sequence is NRF. A helical membrane pass occupies residues 91-112; the sequence is GRRNSMLMMNLLAFVAAVLMGF. At 113-120 the chain is on the extracellular side; that stretch reads SKLGKSFE. Residues 121 to 144 form a helical membrane-spanning segment; the sequence is MLILGRFIIGVYCGLTTGFVPMYV. Residues 145–155 are Cytoplasmic-facing; the sequence is GEVSPTALRGA. Residues 156 to 176 traverse the membrane as a helical segment; the sequence is LGTLHQLGIVVGILIAQVFGL. Q161 contacts D-glucose. Over 177-185 the chain is Extracellular; it reads DSIMGNADL. The chain crosses the membrane as a helical span at residues 186 to 206; it reads WPLLLSVIFIPALLQCILLPF. At 207–271 the chain is on the cytoplasmic side; that stretch reads CPESPRFLLI…LFRSPAYRQP (65 aa). S226 is modified (phosphoserine). A helical transmembrane segment spans residues 272 to 293; sequence ILIAVVLQLSQQLSGINAVFYY. D-glucose contacts are provided by residues 282–283 and N288; that span reads QQ. Over 294 to 306 the chain is Extracellular; the sequence is STSIFEKAGVQQP. Residues 307 to 328 form a helical membrane-spanning segment; it reads VYATIGSGIVNTAFTVVSLFVV. Residue N317 participates in D-glucose binding. The Cytoplasmic segment spans residues 329–334; that stretch reads ERAGRR. A helical transmembrane segment spans residues 335-355; it reads TLHLIGLAGMAGCAVLMTIAL. Topologically, residues 356–365 are extracellular; sequence ALLERLPWMS. The chain crosses the membrane as a helical span at residues 366 to 388; that stretch reads YLSIVAIFGFVAFFEVGPGPIPW. Residues E380 and W388 each contribute to the D-glucose site. The Cytoplasmic segment spans residues 389–401; the sequence is FIVAELFSQGPRP. Residues 402–422 form a helical membrane-spanning segment; sequence AAIAVAGFSNWTSNFIVGMCF. Residues 423 to 429 are Extracellular-facing; sequence QYVEQLC. A helical membrane pass occupies residues 430-450; the sequence is GPYVFIIFTVLLVLFFIFTYF. The Cytoplasmic portion of the chain corresponds to 451–492; it reads KVPETKGRTFDEIASGFRQGGASQSDKTPEELFHPLGADSQV. The residue at position 465 (S465) is a Phosphoserine. A disordered region spans residues 468 to 492; sequence RQGGASQSDKTPEELFHPLGADSQV. T478 carries the post-translational modification Phosphothreonine. S490 carries the post-translational modification Phosphoserine.

It belongs to the major facilitator superfamily. Sugar transporter (TC 2.A.1.1) family. Glucose transporter subfamily. Found in a complex with ADD2, DMTN and SLC2A1. Interacts (via C-terminus cytoplasmic region) with DMTN isoform 2. Interacts with SNX27; the interaction is required when endocytosed to prevent degradation in lysosomes and promote recycling to the plasma membrane. Interacts with GIPC (via PDZ domain). Interacts with STOM. Interacts with SGTA (via Gln-rich region). Interacts with isoform 1 of BSG. Interacts with SMIM43; the interaction may promote SLC2A1-mediated glucose transport to meet the energy needs of mesendoderm differentiation. Post-translationally, phosphorylation at Ser-226 by PKC promotes glucose uptake by increasing cell membrane localization. As to expression, retina (at protein level).

It is found in the cell membrane. The protein localises to the photoreceptor inner segment. It carries out the reaction D-glucose(out) = D-glucose(in). Its activity is regulated as follows. The uptake of glucose is inhibited by cytochalasin B. Glucose uptake is increased in response to phorbol ester 12-O-tetradecanoylphorbol-13-acetate (TPA) treatment: TPA-induced glucose uptake requires phosphorylation at Ser-226. In terms of biological role, facilitative glucose transporter, which is responsible for constitutive or basal glucose uptake. Has a very broad substrate specificity; can transport a wide range of aldoses including both pentoses and hexoses. Most important energy carrier of the brain: present at the blood-brain barrier and assures the energy-independent, facilitative transport of glucose into the brain. In association with BSG and NXNL1, promotes retinal cone survival by increasing glucose uptake into photoreceptors. Required for mesendoderm differentiation. This Mus musculus (Mouse) protein is Solute carrier family 2, facilitated glucose transporter member 1.